The sequence spans 128 residues: Aspartate 1-decarboxylase (128 aa).

The Schiff-base intermediate with substrate; via pyruvic acid role is filled by serine 25. A Pyruvic acid (Ser) modification is found at serine 25. Threonine 57 lines the substrate pocket. Tyrosine 58 acts as the Proton donor in catalysis. Substrate is bound at residue 73-75; sequence GAA.

It belongs to the PanD family. In terms of assembly, heterooctamer of four alpha and four beta subunits. The cofactor is pyruvate. Post-translationally, is synthesized initially as an inactive proenzyme, which is activated by self-cleavage at a specific serine bond to produce a beta-subunit with a hydroxyl group at its C-terminus and an alpha-subunit with a pyruvoyl group at its N-terminus.

Its subcellular location is the cytoplasm. It catalyses the reaction L-aspartate + H(+) = beta-alanine + CO2. Its pathway is cofactor biosynthesis; (R)-pantothenate biosynthesis; beta-alanine from L-aspartate: step 1/1. Functionally, catalyzes the pyruvoyl-dependent decarboxylation of aspartate to produce beta-alanine. In Moorella thermoacetica (strain ATCC 39073 / JCM 9320), this protein is Aspartate 1-decarboxylase.